Here is a 215-residue protein sequence, read N- to C-terminus: RWD domain-containing protein C1393.09c (215 aa).

Residues 7 to 114 (EEREILESIY…SVAKEETNAI (108 aa)) enclose the RWD domain.

The protein resides in the cytoplasm. The protein localises to the nucleus. This chain is RWD domain-containing protein C1393.09c, found in Schizosaccharomyces pombe (strain 972 / ATCC 24843) (Fission yeast).